The following is a 435-amino-acid chain: MLEVEVESDNKHLVADELIALQSIYPEIHLDGNNYGRLNIPVNTESDYFLSFKSPDESTLTDTIVVRHFPDLVMEFFLPEAYPFNSPPTFFLKSSWLPLKQKRVLTSSLIKLWNEIHDCVLFDAIEHVRSIATIAFHLPTEMVFPGGFDDLKKEILAFDKNAKLLEFQIRKFQCNVCFDEFNGTDCFQLTRCGHVSCQSCLRDYYTMCIQEGMFSQIKCIDLDCGKDAPVLTLKELESIVGVQLTNRYKELEEKRRYENDSNIIFCPRSFCQGPSKRDPGQKLAICQKCDFAFCSFCQATWHGDLSPCKLEGDSKKLVEMYLNYQENEPEKALELEKRYGKRIIDRLVEQVKNDEEAEKWVLLNGQRCPTCDRVVERIDGCCHMNCLCGTHFCFLCGAYLMEQNPYKHFNDPVSSCYGMLFASAAEKQRFSENWT.

One can recognise an RWD domain in the interval 16-135 (DELIALQSIY…EHVRSIATIA (120 aa)). The interval 170-420 (RKFQCNVCFD…DPVSSCYGML (251 aa)) is TRIAD supradomain. Zn(2+) is bound by residues C174, C177, C192, H194, C197, C200, C219, C224, C266, C271, C286, C289, C294, C297, H302, C308, C368, and C371. The segment at 174–224 (CNVCFDEFNGTDCFQLTRCGHVSCQSCLRDYYTMCIQEGMFSQIKCIDLDC) adopts an RING-type 1 zinc-finger fold. The segment at 245-308 (TNRYKELEEK…ATWHGDLSPC (64 aa)) adopts an IBR-type zinc-finger fold. The RING-type 2; atypical zinc finger occupies 368-396 (CPTCDRVVERIDGCCHMNCLCGTHFCFLC). The active site involves C381. Zn(2+) contacts are provided by C386, C388, C393, C396, H408, and C416.

The protein belongs to the RBR family. RNF14 subfamily.

It localises to the cytoplasm. The protein resides in the nucleus. The enzyme catalyses [E2 ubiquitin-conjugating enzyme]-S-ubiquitinyl-L-cysteine + [acceptor protein]-L-lysine = [E2 ubiquitin-conjugating enzyme]-L-cysteine + [acceptor protein]-N(6)-ubiquitinyl-L-lysine.. The protein operates within protein modification; protein ubiquitination. In terms of biological role, E3 ubiquitin-protein ligase involved in the rescue of stalled ribosomes by promoting ubiquitination and degradation of proteins on stalled ribosomes. Specifically required to resolve RNA-protein cross-links caused by reactive aldehydes, which trigger translation stress by stalling ribosomes: acts by catalying 'Lys-6'-linked ubiquitination of RNA-protein cross-links, leading to their degradation. This Schizosaccharomyces pombe (strain 972 / ATCC 24843) (Fission yeast) protein is E3 ubiquitin-protein ligase itt1 (itt1).